The chain runs to 103 residues: Large ribosomal subunit protein bL25 (103 aa).

This sequence belongs to the bacterial ribosomal protein bL25 family. Part of the 50S ribosomal subunit; part of the 5S rRNA/L5/L18/L25 subcomplex. Contacts the 5S rRNA. Binds to the 5S rRNA independently of L5 and L18.

Its function is as follows. This is one of the proteins that binds to the 5S RNA in the ribosome where it forms part of the central protuberance. The polypeptide is Large ribosomal subunit protein bL25 (Blochmanniella floridana).